Consider the following 3640-residue polypeptide: MSRKALGSRLSSAHKLQRNWNDWQPRSDSLSASQDGVKCSVSRDRGSEVLFEILPSDRPGTPPLHNDAFTATDALEEGGGYDADGGLSENAYGWKSLGQELRINDVTTDITTFQHGNRALATKDMRKSQDRPLAHSEESRLANLLRRASREDDRERRLATMKQMKEFIVHSENKVVLVKQLDSILSTLNDILNESSKLLQELRQEAAWCLGLLCAALSYEAERIFKWMFLKFSVSTKDEVKLLYLVAVHKALETAGEKKAFSAVMQLVMSNLQSILENLDTPELLCQSVKCILLVARCYPHIFSTNFRDTVDILVGWHIDHTQKHSLTQQVSGWLQSLEQFWVADLAFSTTLLGQFLEDMEAYAEDLSHVVSGESGDEDIPPPTVSLPKLAALLRVFSTVVHSIGERFNPIRGPPITEAYVTDVLNRVLACVTTAKQVFFSEAVLTAGNECVCVLLVSIDLGGQLIDAVISYGLDQLNCCQNCGPEYSLSVLTLLTLVVDQINTKLPASFVEKLLAPKSHLLELRFHREREVMAAAHGVYHAVLSLKNIPILEAAYKLVLGEMGCALNSLLSPLGLPDACPHIQHPAFSQLNFSPERAEFVLIFNLSALTTIGNTKNSLIGMWALSPTVFALLSQNLVIVHSDLAVHHPAVQYAVLYTLYSHCTRHDHFISSSLSSSSPSLFDGAVISTVTTATKRHFSTLLNLLGMLLSKDHLNPEARRLLLTWSLEVALMMKKSETYAPLFSLPSFLKFCKGLLANSLNEDTTICLQACNSLQVLSSSLTMELLQRCVDVCRVQLVHSAVRVRQAFGKLLRSVPMHVALSAHSHSEIKEISLAIRRHMSKVPSNTFHPQDFSDLIGFILYGTVHRGGKEPWLERLYHSCQRLEKKDSAMVPRALLKTEAVLWQWAVWEAAQFTVLSKLRTPLGRAQDTFQTIEGMIRSLAAHSLNTEQELSQWSGGESDEGHHTNQLRLALLLQFLENLEKLMYNAYEGCASALTAPPKGIRTFFYTNRQTCQDWLTRIRLALMRVGLLSGQPAVTVRHGFDLLTEIKNSSTQGPEMEVPVTMLVEALCELRCPEAIQGLAAWSLANTGKSMGWLSSVALQAEGKFEKAALEYQEQLCAVTGMDCSIKVFDRSLLKLTGTNTSSPKHTSSGEGRKTVLLKSSECSPEVLNFLANKACECYVALSDWESVQEWQASMMNLKKNSSSSSVNLKTDFNYIRSMSRFEEGDFTECRAQLELLPGDDYGLLNSTTKDKIDLKRLLPAVLSPDPSELQKAIEVQLLRSAVGAISATNHEQDQKVASSDTLVKYLKQTGRICLGPLRLSTLTLSDSLPTLSTLQLHCANSLENSLCNQHPEDCLIPLFSEALTTCKQQDVQPWLHALRYTTFQREFFQKLKGSSSPVDSHLMELCLTAVKFARKQGNIALATRLLSLCSKPAMSDTEGQDLVQSFRQLSLEGTVGEKWGPELEIEKAKVLFAAGQSVSAMEMLSSCALSYCHSGKCELAACRSVLTLCKWLLADWKDLTPQLKMVVKKNSGSTSLSTLSKNISGLLELPLEDQGMPHITTETTVSVGVGEPDFVLGQLYQLSTTQAPEVAKSWAALASWAYRWGRKVVDNASQGEGVPLLLGEKKEIEELLPAGTSDEDKETIFGILGQAMCRPAGIQDEDMALQNEEDDEDDMVDVIGRQLLGACPWLSDVEDTVTDGLIGVWRRVVDRIFSLYRVSCRAYFTFLKLNAGQVPIDEDDPKLLLNNQNSKQSSDDVIVMATLRLLRLLVKHAGELREGLEHGLASTPTAPWRGIIPQLFSRLNHPEAYIRQSICSLLCRVAQDSPHLILYPAIVGSISLGGEAQTAGNKLPSSLPTLLGNMQGEGLCGGESETGSGPTSQESSRGEEMVMYSSEDQAMMQDCYSKIVDKLSSANPTMVLQVQMLVGELRRVTLLWDELWLGVLQQQHMHVLRRIQQLEDEVKRVQNNNTLRKDEKVAIMREKHSALMKPVVFALDHVRSITAAPAETPHEEWFQETYGDAIHNALERLRSPLNPANPASSWVPFKQIMLSLQQRAQKRASYLLRLDEISPRLTAMANTEMALPGEVSATDAVTIQSVGNTITILPTKTKPKKLYFLGSDGRNYPYLFKGLEDLHLDERIMQFLSIVNTMFTKVNQQESPRFQARHYSVTPLGTRSGLIQWVDGATPLFGLYKRWQQREAVVQAQKAQDSFQQPQNLPMVPRPSELYYSKISPALKAVGLSLDVSRRDWPLSVMRDVLRELMEATPPNLLAKELWCSCTTPSEWWSVTQTYARSTAVMSMVGYIIGLGDRHLDNVLIDMTTGEVVHIDYNVCFEKGKSLRVPEKVPFRMTHNIETALGVTGVEGIFRLSCEQVVQIMRRGRETLLTLLEAFVYDPLVDWTAGGEVGFAGAVYGGGGQQAENKQSKREMERDITRSLFSSRVAEIKVNWFKNRDEMTGVLPQLEEAVDEYLNLQEQLTQVEKVQGKLLEELEFLEGADTRADHPIHSLEHRYSEHTQLQSRQRTVQDAIQGKLSDLDQWISQYQAAFASLEATQLASLLQEISSPIDLGPPSYVPATSFLQNAGQAHLISQCEALEAEVSALLQQRRSQLRGCLEHLHSYATVALLYPRAVLHRHRAHTWKQWMEELVCDMTVDHCQTIYHQYEMQFAPQPPPATCQFLSSIEMALQHHAAETNTRLLRQVERLKAEGASVPVCEEQLQEIERCIKVFLHEDAELGSFSLAGIIVSALCSLTRRNLVMEGAAASAGEQLVELTSRDGAWFLEELCSMSGNITCLVQLLQQCQLLSHDLDIPSPAETSQVVYLTNGVYTCLQELNTNFRQIIFPEALRCMLKGENTLETMLAELDALIDQCADGVSLQGLGEILMAHIRNASMGLEEDPDDHYLDVTRVLRAQYSELIQPRSMESSVQETPKMSAGQMLLVAFDGMFAQLETAFGLLIDKLNSMDVPAAWRKVDVIRESRATQAHFFDNVQTRQVLEEIFFLKRLQTIRDFFRLCGSFAQTLSGTCPTPTDDPPPSNGPVPIVKPLYRGSTVVSEDQMTRPIKAFTADFVRQMLMGLPTQALGLAICSSLSALGMDLIAQVEAKDFGAEGKVSLDDLCKKAVEQGVQAGRLSQLLLNRATVLASSYDTAWKKLDLVRRLEVSIEACKVSLQRNQLHIAMFQWQHEDILGARTQPMTVSPPPRSIILSNMKKKLYKLSQDDASIGSVQEKLASLEGSIEQRLKWAGGANPALAPVLQDFEATIAERRALVIKESQRANQVTFLCSTILNFEGLRTRTPEALNMDAALFELVKRCQATCSYAAQFNTSVSSLELQLLHRLSPAMDMSIGGPEWLVYAQNHLTQEMSSQRAMQEEREQQLESVTETLQLLVDSIKGTLSNHNRQLADVKHLLRAMAKDEENALAEGEEVTYDGSVRQFLSEYKAWQDNVQIVLFTVVQATGQPRSQEQIELLQEIPATLKELKVQSHSIYNGLVGFASPLVTERGSDCISPTSTVQTSFAAAVRCSGVKTQPDSMSQNARKALPRNFGTPADTPPSTLMINSKGLAPSPKRAVRDPKTGRAVQERNSYAVSVWKRVKAKLEGRDVDPNRRMSVTEQVDYVIKEATNVDNLAQLYEGWTAWV.

The segment covering 21-34 (NDWQPRSDSLSASQ) has biased composition (polar residues). Residues 21–41 (NDWQPRSDSLSASQDGVKCSV) are disordered. The 349-residue stretch at 1495–1843 (YCHSGKCELA…LYPAIVGSIS (349 aa)) folds into the FAT domain. Residues 1794–1829 (APWRGIIPQLFSRLNHPEAYIRQSICSLLCRVAQDS) form an HEAT repeat. Positions 1870–1890 (GLCGGESETGSGPTSQESSRG) are disordered. Over residues 1874 to 1887 (GESETGSGPTSQES) the composition is skewed to low complexity. The PI3K/PI4K catalytic domain occupies 2102–2441 (VGNTITILPT…MERDITRSLF (340 aa)). The segment at 2108-2114 (ILPTKTK) is G-loop. The tract at residues 2310 to 2318 (GLGDRHLDN) is catalytic loop. Positions 2330-2354 (HIDYNVCFEKGKSLRVPEKVPFRMT) are activation loop. Residues 3608 to 3640 (RRMSVTEQVDYVIKEATNVDNLAQLYEGWTAWV) form the FATC domain.

This sequence belongs to the PI3/PI4-kinase family. It depends on Mn(2+) as a cofactor. In terms of processing, autophosphorylated.

It is found in the nucleus. It localises to the cytoplasm. The catalysed reaction is L-seryl-[protein] + ATP = O-phospho-L-seryl-[protein] + ADP + H(+). It catalyses the reaction L-threonyl-[protein] + ATP = O-phospho-L-threonyl-[protein] + ADP + H(+). In terms of biological role, serine/threonine protein kinase involved in both mRNA surveillance and genotoxic stress response pathways. Recognizes the substrate consensus sequence [ST]-Q. Plays a central role in nonsense-mediated decay (NMD) of mRNAs containing premature stop codons by phosphorylating UPF1/RENT1. The sequence is that of Serine/threonine-protein kinase SMG1 from Danio rerio (Zebrafish).